The following is a 130-amino-acid chain: MSMQDPIADMLTRIRNGQAANKVAVTMPSSKLKVAIANVLKEEGYIEDFKIEGDTKPVLELELKYFQGKAVVESIQRISRPGLRIYKRKDELPKVMAGLGIAVISTSKGVMTDRAARQAGLGGEIICYVA.

This sequence belongs to the universal ribosomal protein uS8 family. Part of the 30S ribosomal subunit. Contacts proteins S5 and S12.

In terms of biological role, one of the primary rRNA binding proteins, it binds directly to 16S rRNA central domain where it helps coordinate assembly of the platform of the 30S subunit. The chain is Small ribosomal subunit protein uS8 from Pectobacterium atrosepticum (strain SCRI 1043 / ATCC BAA-672) (Erwinia carotovora subsp. atroseptica).